Reading from the N-terminus, the 663-residue chain is Putative ankyrin repeat protein R219 (663 aa).

5 ANK repeats span residues 91–118, 119–148, 200–229, 258–288, and 322–351; these read FRIKKLHVQIMLKEYDKIEFLINSGYKV, DFDSLKLACLNGSLDILNLLLKFYQKKLSS, ANQQVMENAFKTNHTDIINLLLIRAKKDGT, DWHVELYYSALLSGSMEMITYLEDKIDKINP, and YFSHTMNYAIQSGSVNVVDYIWSRGYGITV.

The sequence is that of Putative ankyrin repeat protein R219 from Acanthamoeba polyphaga mimivirus (APMV).